A 460-amino-acid polypeptide reads, in one-letter code: MAGKSIFDKLWERHLITGEEGQPQLMYVDQHYIHEVTSPQAFQGLRDAGRKVRRPDLTFGTFDHNVPTVNIYDIRDVISKAQIDKLSENVKDFGIEHAAHGSELQGIVHMVGPETGKTQPGKFIVCGDSHTATHGAFGAIAFGIGTSEVEHVFATQTIWQVKPKKMLVKFTGVPPKGVYSKDFILALIARYGVAAGVGHVVEYAGDAIDHLTMEERMTICNMSIEFGSKMGIMNPDQKTYDYVKGRPGAPKDFEAAVADWKTLVSDPDAVYDKVIEIDVSELAPMVTWGTNPSMGVEFGAAFPEIRDMNDERAYNYMDLSPGKKAEDIDLGYIFIGSCTNARLSDLQLAAKFVAGKHIAPNLTAIVVPGSRPVKRAAEKMGLDKIFMDAGFEWRDPGCSMCLGMNPDKVPDGVHCASTSNRNFEDRQGFGAKTHLCSPAMAAAAAIAGRFVDVRQLPEVQ.

[4Fe-4S] cluster-binding residues include cysteine 338, cysteine 398, and cysteine 401.

Belongs to the aconitase/IPM isomerase family. LeuC type 1 subfamily. Heterodimer of LeuC and LeuD. The cofactor is [4Fe-4S] cluster.

The catalysed reaction is (2R,3S)-3-isopropylmalate = (2S)-2-isopropylmalate. The protein operates within amino-acid biosynthesis; L-leucine biosynthesis; L-leucine from 3-methyl-2-oxobutanoate: step 2/4. Catalyzes the isomerization between 2-isopropylmalate and 3-isopropylmalate, via the formation of 2-isopropylmaleate. This Streptococcus sanguinis (strain SK36) protein is 3-isopropylmalate dehydratase large subunit.